The chain runs to 354 residues: Ribosomal RNA large subunit methyltransferase M (354 aa).

Residues Ser-183, 216–219 (SPGG), Asp-235, Asp-255, and Asp-271 contribute to the S-adenosyl-L-methionine site. Lys-300 (proton acceptor) is an active-site residue.

This sequence belongs to the class I-like SAM-binding methyltransferase superfamily. RNA methyltransferase RlmE family. RlmM subfamily. In terms of assembly, monomer.

It localises to the cytoplasm. The catalysed reaction is cytidine(2498) in 23S rRNA + S-adenosyl-L-methionine = 2'-O-methylcytidine(2498) in 23S rRNA + S-adenosyl-L-homocysteine + H(+). In terms of biological role, catalyzes the 2'-O-methylation at nucleotide C2498 in 23S rRNA. This Pseudomonas putida (strain GB-1) protein is Ribosomal RNA large subunit methyltransferase M.